Reading from the N-terminus, the 371-residue chain is Probable beta-1,4-xylosyltransferase GT43A (371 aa).

At 1–19 the chain is on the cytoplasmic side; that stretch reads MGTAAVAAAERPKQRRSSH. Residues 20–42 traverse the membrane as a helical; Signal-anchor for type II membrane protein segment; it reads LWKKALLHFSLCFVMGFFTGFAP. Residues 43-371 are Lumenal-facing; that stretch reads SSSSSWRAGS…TSTPKTHNRR (329 aa). N-linked (GlcNAc...) asparagine glycosylation is found at N176 and N299.

This sequence belongs to the glycosyltransferase 43 family.

It is found in the golgi apparatus membrane. In terms of biological role, probable beta-1,4-xylosyltransferase involved in xylan biosynthesis in cell walls. The sequence is that of Probable beta-1,4-xylosyltransferase GT43A from Oryza sativa subsp. japonica (Rice).